The sequence spans 451 residues: MSVLLFGVSHRSAPVSVLEQLSTNEAEQAKIIDQVLQSSLVTEAMVLSTCNRVEVYAVVEAFHGGLSVIGQVLAERSGMSLNDLTKYAYVRYAEAAVEHLFAVTSGLDSAVIGEQQVLGQVRRAYATAEANRTVGRTLHELAQRALSVGKRVHSETGIDAAGASVVSVALGMAETKLSGGLGGRTAAVVGAGAMGALAGAHLVRAGIERVHVVNRSLPRAERLAKNLTEQGVVADAVGLDDIARALVDADVVLSSTGAVRPVVSLADVHYALAQRTLAGAEHQMVVCDLGMPRDVDPAVSGLPGVWVVDMDRIQREPSARAAAVDAEAARNIVAAEVANYLAGQRMAEVTPTVTALRQRAADVVEAELLRLDNRLPGLDAAHRDEVAKTVRRVVDKLLHAPTVRVKQLASAPGGDSYAEALRELFELDPQAVEAVAASELPLITTDLDKTE.

Substrate-binding positions include 49 to 52 (TCNR), Ser109, 114 to 116 (EQQ), and Gln120. Cys50 serves as the catalytic Nucleophile. Position 190–195 (190–195 (GAGAMG)) interacts with NADP(+).

It belongs to the glutamyl-tRNA reductase family. In terms of assembly, homodimer.

It carries out the reaction (S)-4-amino-5-oxopentanoate + tRNA(Glu) + NADP(+) = L-glutamyl-tRNA(Glu) + NADPH + H(+). Its pathway is porphyrin-containing compound metabolism; protoporphyrin-IX biosynthesis; 5-aminolevulinate from L-glutamyl-tRNA(Glu): step 1/2. Catalyzes the NADPH-dependent reduction of glutamyl-tRNA(Glu) to glutamate 1-semialdehyde (GSA). The polypeptide is Glutamyl-tRNA reductase (Mycolicibacterium smegmatis (strain ATCC 700084 / mc(2)155) (Mycobacterium smegmatis)).